Reading from the N-terminus, the 397-residue chain is Purine ribonucleoside efflux pump NepI (397 aa).

At 1–21 the chain is on the cytoplasmic side; that stretch reads MNENIAEKFRADGVARPNWSA. The chain crosses the membrane as a helical span at residues 22–42; sequence VFAVAFCVACLITVEFLPVSL. Residues 43–54 lie on the Periplasmic side of the membrane; the sequence is LTPMAQDLGISE. The chain crosses the membrane as a helical span at residues 55–75; it reads GVAGQSVTVTAFVAMFSSLFI. Over 76–85 the chain is Cytoplasmic; the sequence is TQIIQATDRR. A helical membrane pass occupies residues 86-106; the sequence is YIVILFAVLLTASCLMVSFAN. A topological domain (periplasmic) is located at residue Ser107. A helical transmembrane segment spans residues 108–128; that stretch reads FTLLLLGRACLGLALGGFWAM. Topologically, residues 129-147 are cytoplasmic; the sequence is SASLTMRLVPARTVPKALS. The helical transmembrane segment at 148-168 threads the bilayer; that stretch reads VIFGAVSIALVIAAPLGSFLG. Over 169–175 the chain is Periplasmic; that stretch reads GIIGWRN. The helical transmembrane segment at 176–196 threads the bilayer; that stretch reads VFNAAAVMGVLCVIWVVKSLP. The Cytoplasmic segment spans residues 197–215; the sequence is SLPGEPSHQKQNMFSLLQR. The chain crosses the membrane as a helical span at residues 216–236; the sequence is PGVMAGMIAIFMSFAGQFAFF. At 237-255 the chain is on the periplasmic side; sequence TYIRPVYMNLAGFDVDGLT. A helical transmembrane segment spans residues 256 to 276; that stretch reads LVLLSFGIASFVGTSFSSYVL. The Cytoplasmic portion of the chain corresponds to 277–281; that stretch reads KRSVK. The helical transmembrane segment at 282-302 threads the bilayer; sequence LALAGAPLLLALSALTLIVWG. At 303–305 the chain is on the periplasmic side; sequence SDK. A helical membrane pass occupies residues 306–326; sequence TVAAVIAIIWGLAFALVPVGW. The Cytoplasmic segment spans residues 327-343; sequence STWITRSLADQAEKAGS. The helical transmembrane segment at 344-364 threads the bilayer; that stretch reads IQVAVIQLANTCGAAVGGYAL. At 365–366 the chain is on the periplasmic side; sequence DN. Residues 367–387 form a helical membrane-spanning segment; sequence FGLLSPLALSGGLMLLTALVV. Topologically, residues 388-397 are cytoplasmic; it reads AAKVRITPMS.

This sequence belongs to the major facilitator superfamily. DHA1 family. NepI (TC 2.A.1.2.26) subfamily.

The protein resides in the cell inner membrane. It carries out the reaction inosine(in) + H(+)(out) = inosine(out) + H(+)(in). The enzyme catalyses guanosine(in) + H(+)(out) = guanosine(out) + H(+)(in). Involved in the efflux of purine ribonucleosides, such as inosine and guanosine. The sequence is that of Purine ribonucleoside efflux pump NepI from Salmonella paratyphi B (strain ATCC BAA-1250 / SPB7).